A 257-amino-acid chain; its full sequence is Type III pantothenate kinase (257 aa).

ATP is bound at residue 11–18 (DSGNTAIK). Substrate contacts are provided by residues Y96 and 103–106 (GCDR). D105 (proton acceptor) is an active-site residue. D125 provides a ligand contact to K(+). ATP is bound at residue T128. A substrate-binding site is contributed by T179.

The protein belongs to the type III pantothenate kinase family. As to quaternary structure, homodimer. NH4(+) is required as a cofactor. Requires K(+) as cofactor.

The protein localises to the cytoplasm. It catalyses the reaction (R)-pantothenate + ATP = (R)-4'-phosphopantothenate + ADP + H(+). It functions in the pathway cofactor biosynthesis; coenzyme A biosynthesis; CoA from (R)-pantothenate: step 1/5. Its function is as follows. Catalyzes the phosphorylation of pantothenate (Pan), the first step in CoA biosynthesis. The protein is Type III pantothenate kinase of Nitrosomonas eutropha (strain DSM 101675 / C91 / Nm57).